The following is a 65-amino-acid chain: Large ribosomal subunit protein uL29 (65 aa).

The protein belongs to the universal ribosomal protein uL29 family.

The polypeptide is Large ribosomal subunit protein uL29 (Lactobacillus johnsonii (strain CNCM I-12250 / La1 / NCC 533)).